A 512-amino-acid polypeptide reads, in one-letter code: MKKQHDTIIVLDFGSQYNQLIARRIREFGVYSELHPHTITAEEIKAMNPKGIIFSGGPNSVYGENAFHCDEKIFELGLPIFGICYGMQLMTKHFGGKVERANHREYGKAVLKVENESKLYTNLPEEQVVWMSHGDLVTGLPEGFVVDATSESCPIAGMSNEEKQLYGVQFHPEVRHSEHGNDLIKNFVFGVCGCSEGWNMENFIEVELEKIRETVGDKKVLCALSGGVDSSVVAVLIHKAIGDQLTCIFVDHGLLRKGEAEGVMKTFSEGFHMNVIKIDARERFMKKLKGVEDPEQKRKIIGNEFIYVFDDEAAKLEGIDFLAQGTLYTDIIESGTATAQTIKSHHNVGGLPEDMQFKLIEPLNTLFKDEVRVLGSELGIPDEIVWRQPFPGPGLGIRVLGEITEEKLEIVRESDAILREEIQKAGLDREIWQYFTALPGMRSVGVMGDERTYDYTVGIRAVTSIDGMTADWARIPWDVLEKISVRIVNEVKHVNRVVYDITSKPPATIEWE.

The Glutamine amidotransferase type-1 domain maps to 7–197; sequence TIIVLDFGSQ…VFGVCGCSEG (191 aa). Cys-84 serves as the catalytic Nucleophile. Catalysis depends on residues His-171 and Glu-173. The 190-residue stretch at 198–387 folds into the GMPS ATP-PPase domain; it reads WNMENFIEVE…LGIPDEIVWR (190 aa). 225–231 contributes to the ATP binding site; sequence SGGVDSS.

In terms of assembly, homodimer.

The enzyme catalyses XMP + L-glutamine + ATP + H2O = GMP + L-glutamate + AMP + diphosphate + 2 H(+). The protein operates within purine metabolism; GMP biosynthesis; GMP from XMP (L-Gln route): step 1/1. Functionally, catalyzes the synthesis of GMP from XMP. In Bacillus cytotoxicus (strain DSM 22905 / CIP 110041 / 391-98 / NVH 391-98), this protein is GMP synthase [glutamine-hydrolyzing].